The chain runs to 196 residues: MAPAASKLRAEAGLGPLPRRALSQYLRLLRLYPVLTKAATSGILSALGNFLAQLIEKKQKKENCSQKLDVSGPLRYAIYGFFFTGPLGHFFYLLMERWIPSEVPLAGIKRLLLDRLLFAPAFLSLFFLVMNFLEGQDTAAFAAKMKSGFWPALRMNWRVWTPVQFININYIPVQFRVLFANLVALFWYAYLASLGK.

The Cytoplasmic portion of the chain corresponds to 1 to 30 (MAPAASKLRAEAGLGPLPRRALSQYLRLLR). A helical transmembrane segment spans residues 31–51 (LYPVLTKAATSGILSALGNFL). Topologically, residues 52–76 (AQLIEKKQKKENCSQKLDVSGPLRY) are peroxisomal. Residues 77–97 (AIYGFFFTGPLGHFFYLLMER) traverse the membrane as a helical segment. At 98–115 (WIPSEVPLAGIKRLLLDR) the chain is on the cytoplasmic side. Residues 116–136 (LLFAPAFLSLFFLVMNFLEGQ) traverse the membrane as a helical segment. At 137–174 (DTAAFAAKMKSGFWPALRMNWRVWTPVQFININYIPVQ) the chain is on the peroxisomal side. A helical membrane pass occupies residues 175–196 (FRVLFANLVALFWYAYLASLGK).

It belongs to the peroxisomal membrane protein PXMP2/4 family. Interacts with PEX19 and SIVA1.

It localises to the peroxisome membrane. Functionally, seems to be involved in pore-forming activity and may contribute to the unspecific permeability of the peroxisomal membrane. The polypeptide is Peroxisomal membrane protein 2 (PXMP2) (Bos taurus (Bovine)).